The chain runs to 362 residues: PDZ and LIM domain protein 3 (362 aa).

In terms of domain architecture, PDZ spans 1 to 84 (MPQNVVLPGP…QLCLKIDRAE (84 aa)). 3 positions are modified to phosphoserine: serine 18, serine 92, and serine 263. The disordered stretch occupies residues 261–282 (DGSDDRPAGTRSVRPVTKVHGG). An LIM zinc-binding domain is found at 290–349 (PLCDKCGSGIVGAVVKARDKYRHPECFVCADCNLNLKQKGYFFVEGELYCEMHARARTRP).

Interacts with ACTN2. Forms a heterodimer with PDLIM4 (via LIM domain). As to expression, highly expressed in skeletal muscle and at low levels in the heart.

Its subcellular location is the cytoplasm. It localises to the myofibril. The protein localises to the sarcomere. The protein resides in the z line. Its function is as follows. May play a role in the organization of actin filament arrays within muscle cells. The polypeptide is PDZ and LIM domain protein 3 (Pdlim3) (Rattus norvegicus (Rat)).